The primary structure comprises 245 residues: Tetraspanin-6 (245 aa).

At 1–19 the chain is on the cytoplasmic side; it reads MASPSRRLQTKPVITCFKS. Residues 20-40 traverse the membrane as a helical segment; that stretch reads VLLIYTFIFWITGVILLAVGI. Topologically, residues 41–59 are extracellular; the sequence is WGKVSLENYFSLLNEKATN. Residues 60 to 80 traverse the membrane as a helical segment; that stretch reads VPFVLIATGTVIILLGTFGCF. Over 81 to 93 the chain is Cytoplasmic; the sequence is ATCRASAWMLKLY. A helical transmembrane segment spans residues 94–114; it reads AMFLTLIFLVELVAAIVGFVF. Over 115–208 the chain is Extracellular; the sequence is RHEIKNSFKN…IKVMTIIESE (94 aa). An N-linked (GlcNAc...) asparagine glycan is attached at Asn-134. The chain crosses the membrane as a helical span at residues 209 to 229; the sequence is MGVVAGISFGVACFQLIGIFL. Over 230 to 245 the chain is Cytoplasmic; the sequence is AYCLSRAITNNQYEIV.

It belongs to the tetraspanin (TM4SF) family.

It is found in the membrane. This Pongo abelii (Sumatran orangutan) protein is Tetraspanin-6 (TSPAN6).